A 1218-amino-acid chain; its full sequence is DNA-directed RNA polymerase subunit beta' (1218 aa).

Cysteine 60, cysteine 62, cysteine 75, and cysteine 78 together coordinate Zn(2+). Aspartate 455, aspartate 457, and aspartate 459 together coordinate Mg(2+). Residues cysteine 824, cysteine 897, cysteine 904, and cysteine 907 each contribute to the Zn(2+) site. Residues 1195-1218 form a disordered region; sequence ENEAQSDKSQDEQEIGEITVDMGE.

It belongs to the RNA polymerase beta' chain family. The RNAP catalytic core consists of 2 alpha, 1 beta, 1 beta' and 1 omega subunit. When a sigma factor is associated with the core the holoenzyme is formed, which can initiate transcription. Requires Mg(2+) as cofactor. Zn(2+) serves as cofactor.

It catalyses the reaction RNA(n) + a ribonucleoside 5'-triphosphate = RNA(n+1) + diphosphate. Its function is as follows. DNA-dependent RNA polymerase catalyzes the transcription of DNA into RNA using the four ribonucleoside triphosphates as substrates. This Natranaerobius thermophilus (strain ATCC BAA-1301 / DSM 18059 / JW/NM-WN-LF) protein is DNA-directed RNA polymerase subunit beta'.